The primary structure comprises 490 residues: Acetyl-coenzyme A carboxylase carboxyl transferase subunit beta, chloroplastic (490 aa).

A disordered region spans residues 184–203 (LNSSENEGSSRRTRTKGSDL). One can recognise a CoA carboxyltransferase N-terminal domain in the interval 221 to 490 (LWVQCENCYG…PLNQKSSKIK (270 aa)). 4 residues coordinate Zn(2+): Cys-225, Cys-228, Cys-244, and Cys-247. A C4-type zinc finger spans residues 225-247 (CENCYGLNYKKFLKSKMNICEQC).

It belongs to the AccD/PCCB family. As to quaternary structure, acetyl-CoA carboxylase is a heterohexamer composed of biotin carboxyl carrier protein, biotin carboxylase and 2 subunits each of ACCase subunit alpha and ACCase plastid-coded subunit beta (accD). Requires Zn(2+) as cofactor. RNA expressed in leaf, root, stem, and tuber; the least expression occurs in stems. RNA persists even in senescent leaves.

The protein resides in the plastid. It is found in the chloroplast stroma. It carries out the reaction N(6)-carboxybiotinyl-L-lysyl-[protein] + acetyl-CoA = N(6)-biotinyl-L-lysyl-[protein] + malonyl-CoA. It functions in the pathway lipid metabolism; malonyl-CoA biosynthesis; malonyl-CoA from acetyl-CoA: step 1/1. Component of the acetyl coenzyme A carboxylase (ACC) complex. Biotin carboxylase (BC) catalyzes the carboxylation of biotin on its carrier protein (BCCP) and then the CO(2) group is transferred by the transcarboxylase to acetyl-CoA to form malonyl-CoA. In Solanum tuberosum (Potato), this protein is Acetyl-coenzyme A carboxylase carboxyl transferase subunit beta, chloroplastic.